Reading from the N-terminus, the 217-residue chain is Deoxyribose-phosphate aldolase (217 aa).

The active-site Proton donor/acceptor is aspartate 89. Catalysis depends on lysine 151, which acts as the Schiff-base intermediate with acetaldehyde. Lysine 180 (proton donor/acceptor) is an active-site residue.

It belongs to the DeoC/FbaB aldolase family. DeoC type 1 subfamily.

The protein localises to the cytoplasm. It carries out the reaction 2-deoxy-D-ribose 5-phosphate = D-glyceraldehyde 3-phosphate + acetaldehyde. It participates in carbohydrate degradation; 2-deoxy-D-ribose 1-phosphate degradation; D-glyceraldehyde 3-phosphate and acetaldehyde from 2-deoxy-alpha-D-ribose 1-phosphate: step 2/2. Its function is as follows. Catalyzes a reversible aldol reaction between acetaldehyde and D-glyceraldehyde 3-phosphate to generate 2-deoxy-D-ribose 5-phosphate. This is Deoxyribose-phosphate aldolase from Metamycoplasma arthritidis (strain 158L3-1) (Mycoplasma arthritidis).